Consider the following 261-residue polypeptide: MTKIYFVQFIILFCTVISSDKVNPLFMDSIESDNVKEVVKFLNQGVDVHAHEDYALKYSSFKCNLELVKVLISHGANIHSDRDLALHYAAQQGCFEVVKYLIKNGANVNARQNSALIRACDSHHYEMIKYLIDKGANIHAKNNFCLRNSVLHHKWEIFTYLMNNGADINADNGAALFIAASDNDISAIIMLNAYNADMCIDNCKALLSAAHLGNLDTVKYYTSHSICDTKNELKALTYAYNNNQYHVFDYLLSKSNINSKI.

7 ANK repeats span residues 21 to 50 (KVNP…DVHA), 51 to 80 (HEDY…NIHS), 81 to 110 (DRDL…NVNA), 112 to 140 (QNSA…NIHA), 142 to 170 (NNFC…DINA), 171 to 203 (DNGA…IDNC), and 231 to 259 (NELK…NINS).

The polypeptide is Putative ankyrin repeat protein L99 (Acanthamoeba polyphaga (Amoeba)).